Consider the following 107-residue polypeptide: Urease subunit beta (107 aa).

Belongs to the urease beta subunit family. In terms of assembly, heterotrimer of UreA (gamma), UreB (beta) and UreC (alpha) subunits. Three heterotrimers associate to form the active enzyme.

It localises to the cytoplasm. It catalyses the reaction urea + 2 H2O + H(+) = hydrogencarbonate + 2 NH4(+). The protein operates within nitrogen metabolism; urea degradation; CO(2) and NH(3) from urea (urease route): step 1/1. The polypeptide is Urease subunit beta (Bacillus sp. (strain TB-90)).